Reading from the N-terminus, the 272-residue chain is MTFTEQLAAAWQRNDSLLCVGLDPDPQKLPLSLTGAGGAIFSFCREIVDATADLVCAFKPQIAYFHSQRAEDQLEQLIHYIHDAHPGIPVILDAKRGDIGSTAEHYALEAFERYHADAVTVSPYMGFDSMQPYLAYPDRGVIVLCRTSNPGGSDVQFLQVDGKPLYQLVAEAARERWNTTGQMGLVVGATFPNEIARVRQIVGDMPLLIPGIGAQGGDIEATVKAGRTADGTGMMINSSRAILYASREKDFAAAARNVALQTRETINRYRHG.

Residue K95 is the Proton donor of the active site.

It belongs to the OMP decarboxylase family. Type 2 subfamily.

It catalyses the reaction orotidine 5'-phosphate + H(+) = UMP + CO2. It functions in the pathway pyrimidine metabolism; UMP biosynthesis via de novo pathway; UMP from orotate: step 2/2. The chain is Orotidine 5'-phosphate decarboxylase from Cupriavidus necator (strain ATCC 17699 / DSM 428 / KCTC 22496 / NCIMB 10442 / H16 / Stanier 337) (Ralstonia eutropha).